A 172-amino-acid chain; its full sequence is Large ribosomal subunit protein bL9 (172 aa).

It belongs to the bacterial ribosomal protein bL9 family.

Binds to the 23S rRNA. The protein is Large ribosomal subunit protein bL9 of Chlamydia abortus (strain DSM 27085 / S26/3) (Chlamydophila abortus).